A 464-amino-acid polypeptide reads, in one-letter code: Protein FAM90A8 (464 aa).

3 disordered regions span residues 1-42 (MMAR…DPRL), 69-389 (VPAT…HDGA), and 415-437 (HSPEKPGAFLAQSPHVSEKSEAP). 2 stretches are compositionally biased toward basic and acidic residues: residues 74-89 (GKKEGKENLKPWKPRG) and 97-114 (NKDKGEKEERPRQQDPQR). Over residues 180–197 (LASLSPLRKASLSSSSSL) the composition is skewed to low complexity.

The protein belongs to the FAM90 family.

The sequence is that of Protein FAM90A8 (FAM90A8) from Homo sapiens (Human).